The sequence spans 658 residues: Cysteine-rich receptor-like protein kinase 14 (658 aa).

Residues 1-22 (MELKNLFPIFWFVLVGFAVVSA) form the signal peptide. 2 consecutive Gnk2-homologous domains span residues 23–125 (QECG…NSSF) and 131–240 (AEPH…LFPF). At 23–277 (QECGKTGFFV…ATKKGSITIS (255 aa)) the chain is on the extracellular side. Asn51, Asn60, Asn102, Asn122, and Asn146 each carry an N-linked (GlcNAc...) asparagine glycan. Residues 278-298 (IGIVWAIIIPTVIVVFLVLLA) traverse the membrane as a helical segment. Residues 299-658 (LGFVVYRRRK…DVTITDFEPR (360 aa)) lie on the Cytoplasmic side of the membrane. The 278-residue stretch at 337–614 (FSESNIIGRG…NMMLINNSYV (278 aa)) folds into the Protein kinase domain. Residues 343 to 351 (IGRGGFGEV) and Lys364 contribute to the ATP site. Position 409 is a phosphotyrosine (Tyr409). The active-site Proton acceptor is Asp461. The residue at position 465 (Ser465) is a Phosphoserine. A Phosphothreonine modification is found at Thr501. The residue at position 509 (Tyr509) is a Phosphotyrosine.

It belongs to the protein kinase superfamily. Ser/Thr protein kinase family. CRK subfamily.

It localises to the membrane. The enzyme catalyses L-seryl-[protein] + ATP = O-phospho-L-seryl-[protein] + ADP + H(+). It catalyses the reaction L-threonyl-[protein] + ATP = O-phospho-L-threonyl-[protein] + ADP + H(+). This Arabidopsis thaliana (Mouse-ear cress) protein is Cysteine-rich receptor-like protein kinase 14 (CRK14).